Consider the following 366-residue polypeptide: Chorismate synthase (366 aa).

R48 and R54 together coordinate NADP(+). FMN is bound by residues 125–127, 238–239, G278, 293–297, and R319; these read RSS, NA, and KPTSS.

The protein belongs to the chorismate synthase family. Homotetramer. FMNH2 serves as cofactor.

It catalyses the reaction 5-O-(1-carboxyvinyl)-3-phosphoshikimate = chorismate + phosphate. Its pathway is metabolic intermediate biosynthesis; chorismate biosynthesis; chorismate from D-erythrose 4-phosphate and phosphoenolpyruvate: step 7/7. Its function is as follows. Catalyzes the anti-1,4-elimination of the C-3 phosphate and the C-6 proR hydrogen from 5-enolpyruvylshikimate-3-phosphate (EPSP) to yield chorismate, which is the branch point compound that serves as the starting substrate for the three terminal pathways of aromatic amino acid biosynthesis. This reaction introduces a second double bond into the aromatic ring system. The polypeptide is Chorismate synthase (Pseudoalteromonas atlantica (strain T6c / ATCC BAA-1087)).